Here is a 350-residue protein sequence, read N- to C-terminus: Histidinol-phosphate aminotransferase (350 aa).

Residue Lys207 is modified to N6-(pyridoxal phosphate)lysine.

Belongs to the class-II pyridoxal-phosphate-dependent aminotransferase family. Histidinol-phosphate aminotransferase subfamily. In terms of assembly, homodimer. It depends on pyridoxal 5'-phosphate as a cofactor.

It catalyses the reaction L-histidinol phosphate + 2-oxoglutarate = 3-(imidazol-4-yl)-2-oxopropyl phosphate + L-glutamate. The protein operates within amino-acid biosynthesis; L-histidine biosynthesis; L-histidine from 5-phospho-alpha-D-ribose 1-diphosphate: step 7/9. This chain is Histidinol-phosphate aminotransferase, found in Streptococcus thermophilus (strain ATCC BAA-491 / LMD-9).